The sequence spans 109 residues: Putative transporter-like protein YIL171W (109 aa).

Residues 1–22 (MSGVNNTSANDLSTTESNSNSA) are compositionally biased toward polar residues. The segment at 1–40 (MSGVNNTSANDLSTTESNSNSAVGAPSVKTEHGDSKDSLN) is disordered. Residues 1–56 (MSGVNNTSANDLSTTESNSNSAVGAPSVKTEHGDSKDSLNLDATEAPIDLPQKPLS) are Cytoplasmic-facing. The segment covering 29 to 39 (KTEHGDSKDSL) has biased composition (basic and acidic residues). The chain crosses the membrane as a helical span at residues 57–77 (AYTTVAILCLMIAFGGFIFGW). Residues 78–109 (DTGTISGFVNLSDFIRRFGQKKTTRGLTTYRK) lie on the Extracellular side of the membrane. N87 carries an N-linked (GlcNAc...) asparagine glycan.

This sequence belongs to the major facilitator superfamily. Sugar transporter (TC 2.A.1.1) family.

It localises to the cell membrane. Probable glucose transporter. The polypeptide is Putative transporter-like protein YIL171W (Saccharomyces cerevisiae (strain ATCC 204508 / S288c) (Baker's yeast)).